A 92-amino-acid polypeptide reads, in one-letter code: DNA-directed RNA polymerase subunit Rpo5 (92 aa).

The protein belongs to the archaeal Rpo5/eukaryotic RPB5 RNA polymerase subunit family. In terms of assembly, part of the RNA polymerase complex.

The protein resides in the cytoplasm. The catalysed reaction is RNA(n) + a ribonucleoside 5'-triphosphate = RNA(n+1) + diphosphate. In terms of biological role, DNA-dependent RNA polymerase (RNAP) catalyzes the transcription of DNA into RNA using the four ribonucleoside triphosphates as substrates. This Methanopyrus kandleri (strain AV19 / DSM 6324 / JCM 9639 / NBRC 100938) protein is DNA-directed RNA polymerase subunit Rpo5.